The sequence spans 450 residues: Asparagine--tRNA ligase (450 aa).

Belongs to the class-II aminoacyl-tRNA synthetase family. As to quaternary structure, homodimer.

Its subcellular location is the cytoplasm. It carries out the reaction tRNA(Asn) + L-asparagine + ATP = L-asparaginyl-tRNA(Asn) + AMP + diphosphate + H(+). This chain is Asparagine--tRNA ligase, found in Mycoplasmopsis pulmonis (strain UAB CTIP) (Mycoplasma pulmonis).